We begin with the raw amino-acid sequence, 915 residues long: Rab3 GTPase-activating protein catalytic subunit (915 aa).

This sequence belongs to the Rab3-GAP catalytic subunit family. The Rab3 GTPase-activating complex is a heterodimer composed of rbg-1 and rbg-2.

Its subcellular location is the cytoplasm. In terms of biological role, probable catalytic subunit of a GTPase activating protein that has specificity for Rab3 subfamily. Rab3 proteins are involved in regulated exocytosis of neurotransmitters and hormones. Specifically converts active Rab3-GTP to the inactive form Rab3-GDP. The chain is Rab3 GTPase-activating protein catalytic subunit (rbg-1) from Caenorhabditis elegans.